Consider the following 300-residue polypeptide: Serine/arginine-rich splicing factor SR34A (300 aa).

In terms of domain architecture, RRM 1 spans 7–82 (RSIYVGNLPG…CRLRVELAHG (76 aa)). Disordered regions lie at residues 81 to 110 (HGGRGQSSSDRRGGYGGGGSGYGGGGGGGG) and 198 to 300 (YESS…EGSV). Gly residues predominate over residues 94–110 (GYGGGGSGYGGGGGGGG). The 79-residue stretch at 122–200 (FRVIVRGLPS…GFIRVKKYES (79 aa)) folds into the RRM 2 domain. Basic residues predominate over residues 203–239 (SRSRSPSRSRSRSRSRSRSRGRGRSHSRSRSLSRSKS). A phosphoserine mark is found at serine 207, serine 209, serine 231, serine 233, serine 239, serine 259, serine 275, and serine 285. The segment covering 253–262 (SRSISKSRSP) has biased composition (low complexity). The segment covering 275–287 (SRSKSRSRSRSRS) has biased composition (basic residues).

This sequence belongs to the splicing factor SR family. SR subfamily. As to quaternary structure, component of the spliceosome.

Its subcellular location is the nucleus speckle. The protein resides in the nucleus. It localises to the nucleoplasm. Functionally, probably involved in intron recognition and spliceosome assembly. The protein is Serine/arginine-rich splicing factor SR34A (SR34A) of Arabidopsis thaliana (Mouse-ear cress).